A 261-amino-acid chain; its full sequence is uncharacterized protein (261 aa).

The signal sequence occupies residues 1–22 (MRDSKRVVLYISIIVLSIFIIG). C23 carries N-palmitoyl cysteine lipidation. Residue C23 is the site of S-diacylglycerol cysteine attachment.

This sequence belongs to the staphylococcal tandem lipoprotein family.

The protein localises to the cell membrane. This is an uncharacterized protein from Staphylococcus aureus (strain Mu50 / ATCC 700699).